The primary structure comprises 307 residues: 4-hydroxybenzoate geranyltransferase 1 (307 aa).

Helical transmembrane passes span Pro38–Leu58, Pro62–Ile82, Leu120–Val140, Ile154–Ser174, Gly179–Val199, Met230–Leu250, Ile252–Phe272, and Phe286–Phe306.

This sequence belongs to the UbiA prenyltransferase family. It depends on Mg(2+) as a cofactor. In terms of tissue distribution, expressed only in roots.

It is found in the endoplasmic reticulum membrane. The enzyme catalyses 4-hydroxybenzoate + (2E)-geranyl diphosphate = 3-geranyl-4-hydroxybenzoate + diphosphate. Functionally, prenyltransferase involved in the biosynthesis of shikonin, a naphthoquinone secondary metabolite. Could accept only geranyl diphosphate and not dimethylallyl diphosphate, farnesyl diphosphate, or geranylgeranyl diphosphate as substrate. The chain is 4-hydroxybenzoate geranyltransferase 1 (PGT-1) from Lithospermum erythrorhizon (Purple gromwell).